The primary structure comprises 236 residues: uncharacterized protein (236 aa).

Residues Thr-3–Arg-116 form the Response regulatory domain. Asp-54 carries the 4-aspartylphosphate modification. The HTH LytTR-type domain occupies Leu-135–Phe-235.

This is an uncharacterized protein from Shewanella oneidensis (strain ATCC 700550 / JCM 31522 / CIP 106686 / LMG 19005 / NCIMB 14063 / MR-1).